The primary structure comprises 121 residues: MKKSKRTDRKGSIHIQSTFNNTLITVSDAQGACVCWSSAGLVGFKGAKKGTPFAAGMAAEKVAQLAKDQGMKQVDVFVKGPGAGRETAIRALEAAGLQITSIQDVTGIPHNGCRPPKRRRV.

Belongs to the universal ribosomal protein uS11 family. As to quaternary structure, part of the 30S ribosomal subunit.

The protein resides in the plastid. It localises to the chloroplast. In Cyanidioschyzon merolae (strain NIES-3377 / 10D) (Unicellular red alga), this protein is Small ribosomal subunit protein uS11c.